A 233-amino-acid polypeptide reads, in one-letter code: Ribulose-phosphate 3-epimerase (233 aa).

Residue serine 16 coordinates substrate. A divalent metal cation is bound by residues histidine 41, aspartate 43, and histidine 74. Aspartate 43 functions as the Proton acceptor in the catalytic mechanism. Substrate is bound by residues histidine 74, glycine 150–glycine 153, aspartate 185–glycine 187, and alanine 207–serine 208. Position 185 (aspartate 185) interacts with a divalent metal cation. Aspartate 185 functions as the Proton donor in the catalytic mechanism.

This sequence belongs to the ribulose-phosphate 3-epimerase family. Requires a divalent metal cation as cofactor.

The enzyme catalyses D-ribulose 5-phosphate = D-xylulose 5-phosphate. It participates in carbohydrate degradation. In terms of biological role, catalyzes the reversible epimerization of D-ribulose 5-phosphate to D-xylulose 5-phosphate. This is Ribulose-phosphate 3-epimerase from Chlamydia trachomatis serovar D (strain ATCC VR-885 / DSM 19411 / UW-3/Cx).